A 419-amino-acid chain; its full sequence is Serine hydroxymethyltransferase (419 aa).

Residues L121 and 125–127 (GHL) each bind (6S)-5,6,7,8-tetrahydrofolate. The residue at position 230 (K230) is an N6-(pyridoxal phosphate)lysine. 355–357 (SPF) contributes to the (6S)-5,6,7,8-tetrahydrofolate binding site.

The protein belongs to the SHMT family. Homodimer. Pyridoxal 5'-phosphate serves as cofactor.

Its subcellular location is the cytoplasm. It catalyses the reaction (6R)-5,10-methylene-5,6,7,8-tetrahydrofolate + glycine + H2O = (6S)-5,6,7,8-tetrahydrofolate + L-serine. It functions in the pathway one-carbon metabolism; tetrahydrofolate interconversion. Its pathway is amino-acid biosynthesis; glycine biosynthesis; glycine from L-serine: step 1/1. Functionally, catalyzes the reversible interconversion of serine and glycine with tetrahydrofolate (THF) serving as the one-carbon carrier. This reaction serves as the major source of one-carbon groups required for the biosynthesis of purines, thymidylate, methionine, and other important biomolecules. Also exhibits THF-independent aldolase activity toward beta-hydroxyamino acids, producing glycine and aldehydes, via a retro-aldol mechanism. This Alkalilimnicola ehrlichii (strain ATCC BAA-1101 / DSM 17681 / MLHE-1) protein is Serine hydroxymethyltransferase.